The chain runs to 52 residues: Large ribosomal subunit protein bL32c (52 aa).

It belongs to the bacterial ribosomal protein bL32 family.

The protein localises to the plastid. Its subcellular location is the chloroplast. This is Large ribosomal subunit protein bL32c from Morus indica (Mulberry).